We begin with the raw amino-acid sequence, 196 residues long: Peroxisome assembly protein 22 (196 aa).

A helical transmembrane segment spans residues 15 to 37 (LWIAALVAASIVTISYKVYSSYI).

Belongs to the peroxin-22 family.

It localises to the peroxisome membrane. Functionally, involved in peroxisome biogenesis. The chain is Peroxisome assembly protein 22 (PEX22) from Debaryomyces hansenii (strain ATCC 36239 / CBS 767 / BCRC 21394 / JCM 1990 / NBRC 0083 / IGC 2968) (Yeast).